The primary structure comprises 379 residues: Alcohol dehydrogenase 1 (379 aa).

Zn(2+) is bound by residues Cys-47, Thr-49, His-69, Cys-99, Cys-102, Cys-105, Cys-113, and Cys-177. An alcohol contacts are provided by Thr-49 and His-69. Thr-49 contacts NAD(+). Residues 202–207 (GLGAVG), Asp-226, Arg-231, Thr-272, Val-295, 295–297 (VGV), Phe-322, and Arg-372 each bind NAD(+).

This sequence belongs to the zinc-containing alcohol dehydrogenase family. As to quaternary structure, homodimer. The cofactor is Zn(2+).

It is found in the cytoplasm. The catalysed reaction is a primary alcohol + NAD(+) = an aldehyde + NADH + H(+). It catalyses the reaction a secondary alcohol + NAD(+) = a ketone + NADH + H(+). The protein is Alcohol dehydrogenase 1 (ADH1) of Oryza sativa subsp. indica (Rice).